Here is a 307-residue protein sequence, read N- to C-terminus: 4-hydroxybenzoate octaprenyltransferase (307 aa).

The next 7 membrane-spanning stretches (helical) occupy residues Ala27–Phe47, Trp50–Ile70, Leu101–Leu121, Cys142–Phe162, Ala179–Tyr199, Leu239–Leu259, and Phe285–Trp305.

The protein belongs to the UbiA prenyltransferase family. Mg(2+) is required as a cofactor.

It is found in the cell inner membrane. The enzyme catalyses all-trans-octaprenyl diphosphate + 4-hydroxybenzoate = 4-hydroxy-3-(all-trans-octaprenyl)benzoate + diphosphate. The protein operates within cofactor biosynthesis; ubiquinone biosynthesis. Catalyzes the prenylation of para-hydroxybenzoate (PHB) with an all-trans polyprenyl group. Mediates the second step in the final reaction sequence of ubiquinone-8 (UQ-8) biosynthesis, which is the condensation of the polyisoprenoid side chain with PHB, generating the first membrane-bound Q intermediate 3-octaprenyl-4-hydroxybenzoate. This chain is 4-hydroxybenzoate octaprenyltransferase, found in Methylibium petroleiphilum (strain ATCC BAA-1232 / LMG 22953 / PM1).